Here is a 250-residue protein sequence, read N- to C-terminus: LexA repressor (250 aa).

Residues 1–21 (MTSQERGTRRGDTRGNVRDFP) are compositionally biased toward basic and acidic residues. Positions 1 to 33 (MTSQERGTRRGDTRGNVRDFPDSPADASGLTQR) are disordered. The H-T-H motif DNA-binding region spans 54–74 (VREIGEAVGLTSTSSVAHQLK). Active-site for autocatalytic cleavage activity residues include Ser174 and Lys211.

The protein belongs to the peptidase S24 family. As to quaternary structure, homodimer.

The catalysed reaction is Hydrolysis of Ala-|-Gly bond in repressor LexA.. Represses a number of genes involved in the response to DNA damage (SOS response), including recA and lexA. In the presence of single-stranded DNA, RecA interacts with LexA causing an autocatalytic cleavage which disrupts the DNA-binding part of LexA, leading to derepression of the SOS regulon and eventually DNA repair. The polypeptide is LexA repressor (Parafrankia sp. (strain EAN1pec)).